We begin with the raw amino-acid sequence, 317 residues long: Transaldolase (317 aa).

K132 functions as the Schiff-base intermediate with substrate in the catalytic mechanism.

It belongs to the transaldolase family. Type 1 subfamily. Homodimer.

Its subcellular location is the cytoplasm. The catalysed reaction is D-sedoheptulose 7-phosphate + D-glyceraldehyde 3-phosphate = D-erythrose 4-phosphate + beta-D-fructose 6-phosphate. Its pathway is carbohydrate degradation; pentose phosphate pathway; D-glyceraldehyde 3-phosphate and beta-D-fructose 6-phosphate from D-ribose 5-phosphate and D-xylulose 5-phosphate (non-oxidative stage): step 2/3. Its function is as follows. Transaldolase is important for the balance of metabolites in the pentose-phosphate pathway. The polypeptide is Transaldolase (Shigella dysenteriae serotype 1 (strain Sd197)).